The sequence spans 407 residues: Phosphopentomutase (407 aa).

Positions 10, 307, 312, 348, 349, and 360 each coordinate Mn(2+).

It belongs to the phosphopentomutase family. Requires Mn(2+) as cofactor.

The protein resides in the cytoplasm. It catalyses the reaction 2-deoxy-alpha-D-ribose 1-phosphate = 2-deoxy-D-ribose 5-phosphate. The enzyme catalyses alpha-D-ribose 1-phosphate = D-ribose 5-phosphate. It participates in carbohydrate degradation; 2-deoxy-D-ribose 1-phosphate degradation; D-glyceraldehyde 3-phosphate and acetaldehyde from 2-deoxy-alpha-D-ribose 1-phosphate: step 1/2. In terms of biological role, isomerase that catalyzes the conversion of deoxy-ribose 1-phosphate (dRib-1-P) and ribose 1-phosphate (Rib-1-P) to deoxy-ribose 5-phosphate (dRib-5-P) and ribose 5-phosphate (Rib-5-P), respectively. The sequence is that of Phosphopentomutase from Methylobacterium nodulans (strain LMG 21967 / CNCM I-2342 / ORS 2060).